The sequence spans 880 residues: DNA-directed RNA polymerase subunit Rpo1N (880 aa).

8 residues coordinate Zn(2+): cysteine 58, cysteine 61, cysteine 68, histidine 71, cysteine 98, cysteine 101, cysteine 146, and cysteine 149. The Mg(2+) site is built by aspartate 456, aspartate 458, and aspartate 460. 5 residues coordinate Zn(2+): arginine 573, cysteine 575, cysteine 580, histidine 582, and serine 584.

Belongs to the RNA polymerase beta' chain family. In terms of assembly, part of the 13-subunit RNA polymerase complex. Interacts with TFS4. (Microbial infection) Binds viral protein RIP, which blocks global transcription. It depends on Mg(2+) as a cofactor. Zn(2+) serves as cofactor.

The protein resides in the cytoplasm. It carries out the reaction RNA(n) + a ribonucleoside 5'-triphosphate = RNA(n+1) + diphosphate. (Microbial infection) Binds to viral protein RIP (AC Q3V4R7), which inhibits global transcription. DNA-dependent RNA polymerase (RNAP) catalyzes the transcription of DNA into RNA using the four ribonucleoside triphosphates as substrates. Forms the clamp head domain. This chain is DNA-directed RNA polymerase subunit Rpo1N, found in Sulfolobus acidocaldarius (strain ATCC 33909 / DSM 639 / JCM 8929 / NBRC 15157 / NCIMB 11770).